A 214-amino-acid polypeptide reads, in one-letter code: Osteoclast-stimulating factor 1 (214 aa).

At Ser2 the chain carries N-acetylserine. In terms of domain architecture, SH3 spans 12 to 71 (GQVKVFRALYTFEPRTPDELYFEEGDIIYITDMSDTNWWKGTCKGRTGLIPSNYVAEQAE). ANK repeat units follow at residues 72–101 (SIDNPLHEAAKRGNLSWLRECLDNRVGVNG), 105–135 (AGSTALYWACHGGHRDIVEMLFTQPNIELNQ), and 139–168 (LGDTALHAAAWKGYADIVQLLLEKGARTDL). 2 positions are modified to phosphoserine: Ser202 and Ser213.

As to quaternary structure, interacts with SRC and SMN1. Interacts with FASLG.

Its subcellular location is the cytoplasm. Induces bone resorption, acting probably through a signaling cascade which results in the secretion of factor(s) enhancing osteoclast formation and activity. The chain is Osteoclast-stimulating factor 1 (OSTF1) from Bos taurus (Bovine).